Consider the following 300-residue polypeptide: Glutamyl-Q tRNA(Asp) synthetase (300 aa).

Residues 8 to 12 (RFAPS) and glutamate 44 each bind L-glutamate. Residues 11-21 (PSPTGALHAGS) carry the 'HIGH' region motif. Zn(2+) is bound by residues cysteine 100, cysteine 102, tyrosine 126, and cysteine 130. The L-glutamate site is built by tyrosine 190 and arginine 208. The 'KMSKS' region motif lies at 246–250 (KLSKQ). Position 249 (lysine 249) interacts with ATP.

It belongs to the class-I aminoacyl-tRNA synthetase family. GluQ subfamily. Zn(2+) is required as a cofactor.

Catalyzes the tRNA-independent activation of glutamate in presence of ATP and the subsequent transfer of glutamate onto a tRNA(Asp). Glutamate is transferred on the 2-amino-5-(4,5-dihydroxy-2-cyclopenten-1-yl) moiety of the queuosine in the wobble position of the QUC anticodon. This Leptothrix cholodnii (strain ATCC 51168 / LMG 8142 / SP-6) (Leptothrix discophora (strain SP-6)) protein is Glutamyl-Q tRNA(Asp) synthetase.